Consider the following 144-residue polypeptide: Large ribosomal subunit protein uL13 (144 aa).

This sequence belongs to the universal ribosomal protein uL13 family. In terms of assembly, part of the 50S ribosomal subunit.

Functionally, this protein is one of the early assembly proteins of the 50S ribosomal subunit, although it is not seen to bind rRNA by itself. It is important during the early stages of 50S assembly. This chain is Large ribosomal subunit protein uL13, found in Nitratidesulfovibrio vulgaris (strain ATCC 29579 / DSM 644 / CCUG 34227 / NCIMB 8303 / VKM B-1760 / Hildenborough) (Desulfovibrio vulgaris).